Reading from the N-terminus, the 418-residue chain is Serine hydroxymethyltransferase (418 aa).

Residues L121 and 125 to 127 (GHL) each bind (6S)-5,6,7,8-tetrahydrofolate. K230 carries the post-translational modification N6-(pyridoxal phosphate)lysine. 356 to 358 (SPF) serves as a coordination point for (6S)-5,6,7,8-tetrahydrofolate.

The protein belongs to the SHMT family. As to quaternary structure, homodimer. It depends on pyridoxal 5'-phosphate as a cofactor.

The protein resides in the cytoplasm. The catalysed reaction is (6R)-5,10-methylene-5,6,7,8-tetrahydrofolate + glycine + H2O = (6S)-5,6,7,8-tetrahydrofolate + L-serine. It participates in one-carbon metabolism; tetrahydrofolate interconversion. Its pathway is amino-acid biosynthesis; glycine biosynthesis; glycine from L-serine: step 1/1. Its function is as follows. Catalyzes the reversible interconversion of serine and glycine with tetrahydrofolate (THF) serving as the one-carbon carrier. This reaction serves as the major source of one-carbon groups required for the biosynthesis of purines, thymidylate, methionine, and other important biomolecules. Also exhibits THF-independent aldolase activity toward beta-hydroxyamino acids, producing glycine and aldehydes, via a retro-aldol mechanism. This chain is Serine hydroxymethyltransferase, found in Idiomarina loihiensis (strain ATCC BAA-735 / DSM 15497 / L2-TR).